A 122-amino-acid chain; its full sequence is Large ribosomal subunit protein uL14c (122 aa).

This sequence belongs to the universal ribosomal protein uL14 family. In terms of assembly, part of the 50S ribosomal subunit.

The protein resides in the plastid. The protein localises to the chloroplast. In terms of biological role, binds to 23S rRNA. This Platanus occidentalis (Sycamore) protein is Large ribosomal subunit protein uL14c.